The sequence spans 303 residues: Glycine--tRNA ligase alpha subunit (303 aa).

It belongs to the class-II aminoacyl-tRNA synthetase family. In terms of assembly, tetramer of two alpha and two beta subunits.

It localises to the cytoplasm. It carries out the reaction tRNA(Gly) + glycine + ATP = glycyl-tRNA(Gly) + AMP + diphosphate. This chain is Glycine--tRNA ligase alpha subunit, found in Salmonella paratyphi A (strain ATCC 9150 / SARB42).